The following is an 84-amino-acid chain: Trefoil factor 1 (84 aa).

The signal sequence occupies residues 1–24 (MATMENKVICALVLVSMLALGTLA). The 44-residue stretch at 29–72 (ETCTVAPRERQNCGFPGVTPSQCANKGCCFDDTVRGVPWCFYPN) folds into the P-type domain. 3 disulfides stabilise this stretch: C31-C57, C41-C56, and C51-C68.

As to quaternary structure, heterodimer with GKN2; disulfide linked. In terms of tissue distribution, found in stomach, with highest levels in the upper gastric mucosal cells (at protein level). Detected in goblet cells of the small and large intestine and rectum, small submucosal glands in the esophagus, mucous acini of the sublingual gland, submucosal glands of the trachea, and epithelial cells lining the exocrine pancreatic ducts but not in the remainder of the pancreas (at protein level). Scattered expression is detected in the epithelial cells of the gallbladder and submucosal glands of the vagina, and weak expression is observed in the bronchial goblet cells of the pseudostratified epithelia in the respiratory system (at protein level). Detected in urine (at protein level). Strongly expressed in breast cancer but at low levels in normal mammary tissue. It is regulated by estrogen in MCF-7 cells. Strong expression found in normal gastric mucosa and in the regenerative tissues surrounding ulcerous lesions of gastrointestinal tract, but lower expression found in gastric cancer (at protein level).

It localises to the secreted. In terms of biological role, stabilizer of the mucous gel overlying the gastrointestinal mucosa that provides a physical barrier against various noxious agents. May inhibit the growth of calcium oxalate crystals in urine. In Homo sapiens (Human), this protein is Trefoil factor 1 (TFF1).